A 923-amino-acid polypeptide reads, in one-letter code: Helicase POLQ-like (923 aa).

The disordered stretch occupies residues Met-1–Ile-84. Positions Ser-43–Asn-55 are enriched in low complexity. The Helicase ATP-binding domain occupies Asp-178–Asn-349. ATP is bound at residue Leu-191–Thr-198. The DEAH box signature appears at Asp-295–His-298. Residues Gly-392–Ile-596 enclose the Helicase C-terminal domain.

This sequence belongs to the helicase family. SKI2 subfamily.

The protein resides in the nucleus. The protein localises to the chromosome. The enzyme catalyses Couples ATP hydrolysis with the unwinding of duplex DNA by translocating in the 3'-5' direction.. The catalysed reaction is ATP + H2O = ADP + phosphate + H(+). Its function is as follows. Single-stranded 3'-5' DNA helicase that plays a key role in homology-driven double-strand break (DSB) repair. Involved in different DSB repair mechanisms that are guided by annealing of extensive stretches of complementary bases at break ends, such as microhomology-mediated end-joining (MMEJ), single-strand annealing (SSA) or synthesis-dependent strand annealing (SDSA). This chain is Helicase POLQ-like, found in Caenorhabditis elegans.